The sequence spans 931 residues: MTTGFLQKIFGSRNQRLVKQYQKTVAAINALETQIETLTDDQLRGKTGEFRQRIAAGESLDKLLPEAFAVCREASRRVLKMRHFDVQMIGGMVLHYGKIAEMRTGEGKTLVATLAAYLNALAGRGVHVVTVNDYLAQRDAEWMGRLYNFLGLSVGINLSGMEHDQKQAAYAADITYGTNNEFGFDYLRDNMVYETDSRVQRPLNFAVVDEVDSILIDEARTPLIISGQAEDHTELYVRMNALPPLLERQIGEEKADGTGVEKPGDYTLDEKGRQVFLTESGHEKAERMLAEWGLIGDGESLYAPQNITLMHHVYAALRAHTLFHRDQHYVVQNDEVIIVDEFTGRLMPGRRWSDGLHQAVEAKEHVKIQSENQTLASITFQNYFRMYAKLSGMTGTADTEAYEFNEIYGLETVVIPTNRPPKRIDKQDQIYKTAKERYDAVIRDIRECHERGQPVLVGTTSIENSELLSHLLKQAGLPHEVLNAKQHAREAAIVAEAGRPKRITIATNMAGRGTDIVLGGNVEKQAAFIEADESIPADEKARRIQQLHDEWETLHEQVKTAGGLHIIGTERHESRRIDNQLRGRAGRQGDPGSSRFYLSLEDPLLRIFAGDRVRAIMDRLKMPEGEAIEAGIVTRSIESAQRKVEARNFDIRKQLLEYDDVSNDQRKVIYQQRNELLEAHDIAETIGAMRHGVISEVVRQFVPAGSIEEQWDLPELEETLRNDWQLDLAIQEMVNESSSINADEILDAVTTAADEHYEAKVALVGRESFSAFERSIMLQTLDRLWREHLAALDHLRQGIHLRGYAQKNPKQEYKREAFELFAAMLDAVKQEVTRIVMNVQIQSPEQLEEAAEQIEEQGGQLGNVEFQHADFAAAAAAATAGGAVVADATAEMVSHAMSHSGPAGEVPRVGRNDPCPCGSGKKYKHCHGKLN.

ATP contacts are provided by residues Gln87, 105 to 109, and Asp515; that span reads GEGKT. Cys915, Cys917, Cys926, and His927 together coordinate Zn(2+).

The protein belongs to the SecA family. In terms of assembly, monomer and homodimer. Part of the essential Sec protein translocation apparatus which comprises SecA, SecYEG and auxiliary proteins SecDF-YajC and YidC. Zn(2+) is required as a cofactor.

The protein resides in the cell inner membrane. Its subcellular location is the cytoplasm. The catalysed reaction is ATP + H2O + cellular proteinSide 1 = ADP + phosphate + cellular proteinSide 2.. Its function is as follows. Part of the Sec protein translocase complex. Interacts with the SecYEG preprotein conducting channel. Has a central role in coupling the hydrolysis of ATP to the transfer of proteins into and across the cell membrane, serving both as a receptor for the preprotein-SecB complex and as an ATP-driven molecular motor driving the stepwise translocation of polypeptide chains across the membrane. This Burkholderia pseudomallei (strain 1106a) protein is Protein translocase subunit SecA.